The sequence spans 273 residues: Ribosomal RNA small subunit methyltransferase A (273 aa).

Residues Asn18, Leu20, Gly45, Glu66, Asp91, and Asn113 each coordinate S-adenosyl-L-methionine.

Belongs to the class I-like SAM-binding methyltransferase superfamily. rRNA adenine N(6)-methyltransferase family. RsmA subfamily.

Its subcellular location is the cytoplasm. The enzyme catalyses adenosine(1518)/adenosine(1519) in 16S rRNA + 4 S-adenosyl-L-methionine = N(6)-dimethyladenosine(1518)/N(6)-dimethyladenosine(1519) in 16S rRNA + 4 S-adenosyl-L-homocysteine + 4 H(+). Its function is as follows. Specifically dimethylates two adjacent adenosines (A1518 and A1519) in the loop of a conserved hairpin near the 3'-end of 16S rRNA in the 30S particle. May play a critical role in biogenesis of 30S subunits. This chain is Ribosomal RNA small subunit methyltransferase A, found in Citrobacter koseri (strain ATCC BAA-895 / CDC 4225-83 / SGSC4696).